The chain runs to 521 residues: Probable rhamnogalacturonase B (521 aa).

The first 21 residues, 1–21 (MRLHAFTLLSLLGLVPSFAAA), serve as a signal peptide directing secretion. Cys42 and Cys68 are oxidised to a cystine. Asn145 carries N-linked (GlcNAc...) asparagine glycosylation. Asp219 functions as the Proton donor in the catalytic mechanism. Residues Cys221 and Cys238 are joined by a disulfide bond. Asn239 carries an N-linked (GlcNAc...) asparagine glycan. His294 is an active-site residue. N-linked (GlcNAc...) asparagine glycosylation occurs at Asn321. Intrachain disulfides connect Cys344–Cys350 and Cys372–Cys381. Residues 462–521 (ETPAAASRSEQVVQGAPQETGQSAPESAGPVPSGNPGPVPTGGSRPSRHRHGHHHFGSAI) are disordered. Over residues 469 to 486 (RSEQVVQGAPQETGQSAP) the composition is skewed to polar residues. Residues 507 to 521 (PSRHRHGHHHFGSAI) show a composition bias toward basic residues.

Belongs to the glycosyl hydrolase 28 family.

It is found in the secreted. The enzyme catalyses Endohydrolysis of alpha-D-GalA-(1-&gt;2)-alpha-L-Rha glycosidic bond in the rhamnogalacturonan I backbone with initial inversion of anomeric configuration releasing oligosaccharides with beta-D-GalA at the reducing end.. Its function is as follows. Pectinolytic enzymes consist of four classes of enzymes: pectine lyase, polygalacturonase, pectin methylesterase and rhamnogalacturonase. Hydrolyzes alpha-D-galacturonopyranosyl-(1,2)-alpha-L-rhamnopyranosyl linkages in the backbone of the hairy regions of pectins. The polypeptide is Probable rhamnogalacturonase B (rhgB) (Aspergillus fumigatus (strain CBS 144.89 / FGSC A1163 / CEA10) (Neosartorya fumigata)).